The chain runs to 190 residues: ATP synthase subunit b (190 aa).

Residues 24–44 traverse the membrane as a helical segment; the sequence is IVGSLICFVVILFFFWKLVLP.

The protein belongs to the ATPase B chain family. As to quaternary structure, F-type ATPases have 2 components, F(1) - the catalytic core - and F(0) - the membrane proton channel. F(1) has five subunits: alpha(3), beta(3), gamma(1), delta(1), epsilon(1). F(0) has three main subunits: a(1), b(2) and c(10-14). The alpha and beta chains form an alternating ring which encloses part of the gamma chain. F(1) is attached to F(0) by a central stalk formed by the gamma and epsilon chains, while a peripheral stalk is formed by the delta and b chains.

The protein localises to the cell membrane. Its function is as follows. F(1)F(0) ATP synthase produces ATP from ADP in the presence of a proton or sodium gradient. F-type ATPases consist of two structural domains, F(1) containing the extramembraneous catalytic core and F(0) containing the membrane proton channel, linked together by a central stalk and a peripheral stalk. During catalysis, ATP synthesis in the catalytic domain of F(1) is coupled via a rotary mechanism of the central stalk subunits to proton translocation. In terms of biological role, component of the F(0) channel, it forms part of the peripheral stalk, linking F(1) to F(0). In Leifsonia xyli subsp. xyli (strain CTCB07), this protein is ATP synthase subunit b.